A 388-amino-acid polypeptide reads, in one-letter code: Chorismate synthase (388 aa).

The NADP(+) site is built by Arg-39 and Arg-45. FMN contacts are provided by residues 132 to 134 (RSS), 251 to 252 (NA), Gly-296, 311 to 315 (KPIPT), and Arg-337.

As to quaternary structure, homotetramer. FMNH2 serves as cofactor.

It catalyses the reaction 5-O-(1-carboxyvinyl)-3-phosphoshikimate = chorismate + phosphate. The protein operates within metabolic intermediate biosynthesis; chorismate biosynthesis; chorismate from D-erythrose 4-phosphate and phosphoenolpyruvate: step 7/7. Catalyzes the anti-1,4-elimination of the C-3 phosphate and the C-6 proR hydrogen from 5-enolpyruvylshikimate-3-phosphate (EPSP) to yield chorismate, which is the branch point compound that serves as the starting substrate for the three terminal pathways of aromatic amino acid biosynthesis. This reaction introduces a second double bond into the aromatic ring system. This is Chorismate synthase from Staphylococcus aureus.